Here is a 430-residue protein sequence, read N- to C-terminus: 3-phosphoshikimate 1-carboxyvinyltransferase (430 aa).

Residues lysine 23, serine 24, and arginine 28 each contribute to the 3-phosphoshikimate site. Lysine 23 contacts phosphoenolpyruvate. Positions 95 and 123 each coordinate phosphoenolpyruvate. Positions 169, 171, 315, and 342 each coordinate 3-phosphoshikimate. A phosphoenolpyruvate-binding site is contributed by glutamine 171. Aspartate 315 (proton acceptor) is an active-site residue. Phosphoenolpyruvate is bound by residues arginine 346 and arginine 388.

This sequence belongs to the EPSP synthase family. As to quaternary structure, monomer.

The protein localises to the cytoplasm. The catalysed reaction is 3-phosphoshikimate + phosphoenolpyruvate = 5-O-(1-carboxyvinyl)-3-phosphoshikimate + phosphate. It functions in the pathway metabolic intermediate biosynthesis; chorismate biosynthesis; chorismate from D-erythrose 4-phosphate and phosphoenolpyruvate: step 6/7. Its function is as follows. Catalyzes the transfer of the enolpyruvyl moiety of phosphoenolpyruvate (PEP) to the 5-hydroxyl of shikimate-3-phosphate (S3P) to produce enolpyruvyl shikimate-3-phosphate and inorganic phosphate. This chain is 3-phosphoshikimate 1-carboxyvinyltransferase, found in Streptococcus pyogenes serotype M3 (strain ATCC BAA-595 / MGAS315).